Consider the following 86-residue polypeptide: Acyl-CoA-binding protein homolog 1 (86 aa).

The 86-residue stretch at 1–86 (MTLSFDDAAA…VEELIAKYGA (86 aa)) folds into the ACB domain. Residues K13, 28-32 (YALFK), K50, K54, and Y73 contribute to the an acyl-CoA site.

This sequence belongs to the ACBP family.

Its function is as follows. Binds medium- and long-chain acyl-CoA esters with very high affinity and may function as an intracellular carrier of acyl-CoA esters. This Caenorhabditis elegans protein is Acyl-CoA-binding protein homolog 1 (acbp-1).